We begin with the raw amino-acid sequence, 304 residues long: Acetyl-coenzyme A carboxylase carboxyl transferase subunit beta (304 aa).

Positions 16-42 (SSLPPKNSEGGLAYFDEPSPEQESTRK) are disordered. In terms of domain architecture, CoA carboxyltransferase N-terminal spans 48-304 (LWVKCPKCGE…LLRYHQEGAV (257 aa)). Residues C52, C55, C71, and C74 each contribute to the Zn(2+) site. A C4-type zinc finger spans residues 52 to 74 (CPKCGEALFNKDLVENQRVCLTC).

It belongs to the AccD/PCCB family. As to quaternary structure, acetyl-CoA carboxylase is a heterohexamer composed of biotin carboxyl carrier protein (AccB), biotin carboxylase (AccC) and two subunits each of ACCase subunit alpha (AccA) and ACCase subunit beta (AccD). The cofactor is Zn(2+).

Its subcellular location is the cytoplasm. The enzyme catalyses N(6)-carboxybiotinyl-L-lysyl-[protein] + acetyl-CoA = N(6)-biotinyl-L-lysyl-[protein] + malonyl-CoA. The protein operates within lipid metabolism; malonyl-CoA biosynthesis; malonyl-CoA from acetyl-CoA: step 1/1. In terms of biological role, component of the acetyl coenzyme A carboxylase (ACC) complex. Biotin carboxylase (BC) catalyzes the carboxylation of biotin on its carrier protein (BCCP) and then the CO(2) group is transferred by the transcarboxylase to acetyl-CoA to form malonyl-CoA. In Desulfitobacterium hafniense (strain Y51), this protein is Acetyl-coenzyme A carboxylase carboxyl transferase subunit beta.